We begin with the raw amino-acid sequence, 851 residues long: UPF0508 protein CAGL0M08074g (851 aa).

This sequence belongs to the UPF0508 family.

This chain is UPF0508 protein CAGL0M08074g, found in Candida glabrata (strain ATCC 2001 / BCRC 20586 / JCM 3761 / NBRC 0622 / NRRL Y-65 / CBS 138) (Yeast).